Consider the following 142-residue polypeptide: ER-derived vesicles protein ERV15 (142 aa).

Over 1 to 7 (MSGTGLS) the chain is Cytoplasmic. Residues 8–28 (LFVTGLILNCLNSICQIYFTI) form a helical membrane-spanning segment. Residues 29-55 (LYGDLEADYINSIELCKRVNRLSVPEA) are Extracellular-facing. The helical transmembrane segment at 56-76 (ILQAFISALFLFNGYWFVFLL) threads the bilayer. Residues 77–114 (NVPVLAYNASKVYKKTHLLDATDIFRKLGRCKIECFLK) are Cytoplasmic-facing. A helical transmembrane segment spans residues 115–135 (LGFYLLIFFFYFYRMVTALLE). The Extracellular segment spans residues 136 to 142 (NDANLIS).

This sequence belongs to the cornichon family.

Its subcellular location is the membrane. The protein is ER-derived vesicles protein ERV15 (ERV15) of Saccharomyces cerevisiae (strain ATCC 204508 / S288c) (Baker's yeast).